The chain runs to 371 residues: Chaperone protein DnaJ (371 aa).

The J domain occupies 5–70; sequence SYYDILGVSK…KKRQAYDQFG (66 aa). A CR-type zinc finger spans residues 139-217; sequence GREYKIEIPR…CGGQGLQEKR (79 aa). 8 residues coordinate Zn(2+): C152, C155, C169, C172, C191, C194, C205, and C208. 4 CXXCXGXG motif repeats span residues 152-159, 169-176, 191-198, and 205-212; these read CGDCNGSG, CPDCGGSG, CPTCRGKG, and CKTCGGQG.

This sequence belongs to the DnaJ family. Homodimer. It depends on Zn(2+) as a cofactor.

Its subcellular location is the cytoplasm. In terms of biological role, participates actively in the response to hyperosmotic and heat shock by preventing the aggregation of stress-denatured proteins and by disaggregating proteins, also in an autonomous, DnaK-independent fashion. Unfolded proteins bind initially to DnaJ; upon interaction with the DnaJ-bound protein, DnaK hydrolyzes its bound ATP, resulting in the formation of a stable complex. GrpE releases ADP from DnaK; ATP binding to DnaK triggers the release of the substrate protein, thus completing the reaction cycle. Several rounds of ATP-dependent interactions between DnaJ, DnaK and GrpE are required for fully efficient folding. Also involved, together with DnaK and GrpE, in the DNA replication of plasmids through activation of initiation proteins. The chain is Chaperone protein DnaJ from Leptospira borgpetersenii serovar Hardjo-bovis (strain JB197).